Consider the following 286-residue polypeptide: General stress protein 39 (286 aa).

A disordered region spans residues 1–26 (MANYPKELPAQTQSRQPGIESEMNPS). 46–70 (LITGGDSGIGRAVSVAYAKEGADIA) serves as a coordination point for NAD(+). Ser-178 contributes to the substrate binding site. The active-site Proton acceptor is Tyr-191.

This sequence belongs to the short-chain dehydrogenases/reductases (SDR) family.

The protein is General stress protein 39 (ydaD) of Bacillus subtilis (strain 168).